We begin with the raw amino-acid sequence, 466 residues long: Asparagine--tRNA ligase (466 aa).

Belongs to the class-II aminoacyl-tRNA synthetase family. As to quaternary structure, homodimer.

It is found in the cytoplasm. It catalyses the reaction tRNA(Asn) + L-asparagine + ATP = L-asparaginyl-tRNA(Asn) + AMP + diphosphate + H(+). This chain is Asparagine--tRNA ligase, found in Shewanella sp. (strain MR-4).